Consider the following 700-residue polypeptide: Acetoacetyl-CoA synthetase (700 aa).

The disordered stretch occupies residues 1 to 35 (MTAVSANGKTTEKHENGAHTNGTTNGTTNGSMNGN). Residues 18–35 (AHTNGTTNGTTNGSMNGN) show a composition bias toward low complexity.

Belongs to the ATP-dependent AMP-binding enzyme family. In terms of tissue distribution, present in most cells of the organism.

Its subcellular location is the cytoplasm. The protein localises to the nucleus. The enzyme catalyses acetoacetate + ATP + CoA = acetoacetyl-CoA + AMP + diphosphate. Activates acetoacetate to acetoacetyl-CoA. Negatively regulates let-60 Ras activity during vulval induction. The polypeptide is Acetoacetyl-CoA synthetase (sur-5) (Caenorhabditis elegans).